The sequence spans 114 residues: Ribonuclease P protein component (114 aa).

This sequence belongs to the RnpA family. As to quaternary structure, consists of a catalytic RNA component (M1 or rnpB) and a protein subunit.

It carries out the reaction Endonucleolytic cleavage of RNA, removing 5'-extranucleotides from tRNA precursor.. In terms of biological role, RNaseP catalyzes the removal of the 5'-leader sequence from pre-tRNA to produce the mature 5'-terminus. It can also cleave other RNA substrates such as 4.5S RNA. The protein component plays an auxiliary but essential role in vivo by binding to the 5'-leader sequence and broadening the substrate specificity of the ribozyme. This is Ribonuclease P protein component from Legionella pneumophila (strain Lens).